Here is a 73-residue protein sequence, read N- to C-terminus: Eukaryotic translation initiation factor 4 gamma 2 (73 aa).

The W2 domain maps to Gln1–Glu70.

The protein belongs to the eukaryotic initiation factor 4G family. As to quaternary structure, interacts with the serine/threonine protein kinases MKNK1 and MKNK2. Binds EIF4A and EIF3. In terms of processing, phosphorylation; hyperphosphorylated during mitosis.

Its function is as follows. Appears to play a role in the switch from cap-dependent to IRES-mediated translation during mitosis, apoptosis and viral infection. Cleaved by some caspases and viral proteases. This chain is Eukaryotic translation initiation factor 4 gamma 2 (EIF4G2), found in Gallus gallus (Chicken).